A 152-amino-acid chain; its full sequence is Large ribosomal subunit protein bL9 (152 aa).

It belongs to the bacterial ribosomal protein bL9 family.

Functionally, binds to the 23S rRNA. The sequence is that of Large ribosomal subunit protein bL9 from Mycobacterium sp. (strain JLS).